A 184-amino-acid polypeptide reads, in one-letter code: UPF0340 protein TTE0860 (184 aa).

The protein belongs to the UPF0340 family.

In Caldanaerobacter subterraneus subsp. tengcongensis (strain DSM 15242 / JCM 11007 / NBRC 100824 / MB4) (Thermoanaerobacter tengcongensis), this protein is UPF0340 protein TTE0860.